Consider the following 210-residue polypeptide: Large ribosomal subunit protein bL25 (210 aa).

The segment at 179–210 (LPPQQEEEIHSGEQQEPGHPDAEEGRETTPES) is disordered. Residues 185–210 (EEIHSGEQQEPGHPDAEEGRETTPES) show a composition bias toward basic and acidic residues.

It belongs to the bacterial ribosomal protein bL25 family. CTC subfamily. As to quaternary structure, part of the 50S ribosomal subunit; part of the 5S rRNA/L5/L18/L25 subcomplex. Contacts the 5S rRNA. Binds to the 5S rRNA independently of L5 and L18.

Its function is as follows. This is one of the proteins that binds to the 5S RNA in the ribosome where it forms part of the central protuberance. This chain is Large ribosomal subunit protein bL25, found in Geobacillus sp. (strain WCH70).